Consider the following 541-residue polypeptide: Glucose-6-phosphate isomerase (541 aa).

Glu346 functions as the Proton donor in the catalytic mechanism. Active-site residues include His377 and Lys506.

The protein belongs to the GPI family.

It localises to the cytoplasm. The enzyme catalyses alpha-D-glucose 6-phosphate = beta-D-fructose 6-phosphate. Its pathway is carbohydrate biosynthesis; gluconeogenesis. It participates in carbohydrate degradation; glycolysis; D-glyceraldehyde 3-phosphate and glycerone phosphate from D-glucose: step 2/4. Catalyzes the reversible isomerization of glucose-6-phosphate to fructose-6-phosphate. In Rhizobium leguminosarum bv. trifolii (strain WSM2304), this protein is Glucose-6-phosphate isomerase.